A 201-amino-acid chain; its full sequence is NAD(P)H-dependent FMN reductase ntnL (201 aa).

FMN-binding positions include arginine 12, 90 to 93 (EYNG), and tyrosine 120.

In terms of assembly, homodimer.

The catalysed reaction is FMNH2 + NADP(+) = FMN + NADPH + 2 H(+). It catalyses the reaction FMNH2 + NAD(+) = FMN + NADH + 2 H(+). It functions in the pathway secondary metabolite biosynthesis; terpenoid biosynthesis. In terms of biological role, NAD(P)H-dependent FMN reductase; part of the gene cluster that mediates the biosynthesis of the meroterpenoids nectripenoids A and B, as well as cochliquninone D and isocochliquninone E. The pathway probably begins with the HR-PKS ntnH that catalyzes two chain-extension steps to form a reduced triketide, which then primes the SAT domain in the NR-PKS ntnG to initiate three more cycles of extension to give a linear hexaketide corresponding to the polyketide part of nectripenoids. The FAD-dependent monooxygenase ntnJ then performs an oxidative decarboxylation at C11 of the ntnH/ntnG product, via an electrophilic aromatic hydroxylation with concomitant ipso-decarboxylation. The membrane-bound polyprenyl transferase ntnF then introduces a farnesyl group before the FAD-dependent monooxygenase ntnK functions as the first epoxidase on terminal C12'-C13' olefin, followed by a second epoxidation on C7'-C8' catalyzed by ntnA. The terpene cyclase/mutase ntnI then initiates the sequential tricyclic ring formation through protonation of the terminal epoxide and catalyzes the regioselective and stereoselective 6/6/6-tricyclic ring formation. The cytochrome P450 monooxygenase ntnM may then hydroxylate C1'. The chain is NAD(P)H-dependent FMN reductase ntnL from Nectria sp.